A 360-amino-acid chain; its full sequence is Alkanal monooxygenase alpha chain (360 aa).

The protein belongs to the bacterial luciferase oxidoreductase family. As to quaternary structure, heterodimer of an alpha and a beta chain.

The enzyme catalyses a long-chain fatty aldehyde + FMNH2 + O2 = a long-chain fatty acid + hnu + FMN + H2O + 2 H(+). In terms of biological role, light-emitting reaction in luminous bacteria. The protein is Alkanal monooxygenase alpha chain (luxA) of Photorhabdus luminescens (Xenorhabdus luminescens).